Here is a 486-residue protein sequence, read N- to C-terminus: Aspartyl/glutamyl-tRNA(Asn/Gln) amidotransferase subunit B (486 aa).

Belongs to the GatB/GatE family. GatB subfamily. As to quaternary structure, heterotrimer of A, B and C subunits.

It catalyses the reaction L-glutamyl-tRNA(Gln) + L-glutamine + ATP + H2O = L-glutaminyl-tRNA(Gln) + L-glutamate + ADP + phosphate + H(+). It carries out the reaction L-aspartyl-tRNA(Asn) + L-glutamine + ATP + H2O = L-asparaginyl-tRNA(Asn) + L-glutamate + ADP + phosphate + 2 H(+). Functionally, allows the formation of correctly charged Asn-tRNA(Asn) or Gln-tRNA(Gln) through the transamidation of misacylated Asp-tRNA(Asn) or Glu-tRNA(Gln) in organisms which lack either or both of asparaginyl-tRNA or glutaminyl-tRNA synthetases. The reaction takes place in the presence of glutamine and ATP through an activated phospho-Asp-tRNA(Asn) or phospho-Glu-tRNA(Gln). The polypeptide is Aspartyl/glutamyl-tRNA(Asn/Gln) amidotransferase subunit B (Orientia tsutsugamushi (strain Ikeda) (Rickettsia tsutsugamushi)).